The sequence spans 367 residues: Heme A synthase (367 aa).

The next 8 membrane-spanning stretches (helical) occupy residues 25–45, 111–131, 139–159, 174–194, 210–230, 272–292, 305–325, and 327–347; these read ALRLWLGFVLLALFCLVLVGG, LIARGIGVIFALPLLYFWLTG, WPLVGILALGALQGFIGWWMV, LATHLVMACLIFAGCMWIMRG, GLAAAIAVFALFQIYLGALVA, FIHRIGAYTLFALVLINMVIA, AVLLFALVTVQAAIGVATLLM, and VPLHWGLLHQAGALVVFGFAV. His274 is a binding site for heme. Heme is bound at residue His335.

The protein belongs to the COX15/CtaA family. Type 2 subfamily. Interacts with CtaB. The cofactor is heme b.

The protein resides in the cell membrane. The catalysed reaction is Fe(II)-heme o + 2 A + H2O = Fe(II)-heme a + 2 AH2. Its pathway is porphyrin-containing compound metabolism; heme A biosynthesis; heme A from heme O: step 1/1. In terms of biological role, catalyzes the conversion of heme O to heme A by two successive hydroxylations of the methyl group at C8. The first hydroxylation forms heme I, the second hydroxylation results in an unstable dihydroxymethyl group, which spontaneously dehydrates, resulting in the formyl group of heme A. In Rhizobium etli (strain ATCC 51251 / DSM 11541 / JCM 21823 / NBRC 15573 / CFN 42), this protein is Heme A synthase.